Consider the following 208-residue polypeptide: Riboflavin synthase (208 aa).

Lumazine-binding repeat units follow at residues 1–97 and 98–195; these read MFTG…MGGH and FVQG…EKLV. 2,4-dihydroxypteridine-binding positions include 4–6, 48–50, 62–67, 101–103, lysine 137, 146–148, and 160–165; these read GLV, CLT, GIAPES, GHV, SLT, and MMISYT.

Homotrimer.

The enzyme catalyses 2 6,7-dimethyl-8-(1-D-ribityl)lumazine + H(+) = 5-amino-6-(D-ribitylamino)uracil + riboflavin. Its pathway is cofactor biosynthesis; riboflavin biosynthesis; riboflavin from 2-hydroxy-3-oxobutyl phosphate and 5-amino-6-(D-ribitylamino)uracil: step 2/2. Its function is as follows. Catalyzes the dismutation of two molecules of 6,7-dimethyl-8-ribityllumazine, resulting in the formation of riboflavin and 5-amino-6-(D-ribitylamino)uracil. In Schizosaccharomyces pombe (strain 972 / ATCC 24843) (Fission yeast), this protein is Riboflavin synthase (rib5).